We begin with the raw amino-acid sequence, 196 residues long: Peptidyl-tRNA hydrolase (196 aa).

Tyr-19 provides a ligand contact to tRNA. The Proton acceptor role is filled by His-24. Residues Tyr-68, Asn-70, and Asn-116 each coordinate tRNA.

It belongs to the PTH family. Monomer.

It localises to the cytoplasm. It catalyses the reaction an N-acyl-L-alpha-aminoacyl-tRNA + H2O = an N-acyl-L-amino acid + a tRNA + H(+). Functionally, hydrolyzes ribosome-free peptidyl-tRNAs (with 1 or more amino acids incorporated), which drop off the ribosome during protein synthesis, or as a result of ribosome stalling. Its function is as follows. Catalyzes the release of premature peptidyl moieties from peptidyl-tRNA molecules trapped in stalled 50S ribosomal subunits, and thus maintains levels of free tRNAs and 50S ribosomes. This is Peptidyl-tRNA hydrolase from Aromatoleum aromaticum (strain DSM 19018 / LMG 30748 / EbN1) (Azoarcus sp. (strain EbN1)).